A 344-amino-acid chain; its full sequence is Probable aldo-keto reductase 1 (344 aa).

Residue Y63 is the Proton donor of the active site. H130 provides a ligand contact to substrate. 209 to 219 (SPLGLGFFAAG) is an NADP(+) binding site.

It belongs to the aldo/keto reductase family.

The sequence is that of Probable aldo-keto reductase 1 from Arabidopsis thaliana (Mouse-ear cress).